Consider the following 989-residue polypeptide: Cation-chloride cotransporter 1 (989 aa).

The span at 1-10 (MENGEIEGAA) shows a compositional bias: acidic residues. Residues 1–29 (MENGEIEGAADDGVPVPAPPNGRRYRPVG) are disordered. At 1–132 (MENGEIEGAA…GRPKETGPKF (132 aa)) the chain is on the cytoplasmic side. Residues 133-153 (GTMMGVFVPCLQNILGIIYYI) traverse the membrane as a helical segment. Topologically, residues 154-167 (RFTWIVGMAGVWQS) are extracellular. The helical transmembrane segment at 168 to 188 (LVLVSFCGACTFLTGISLSAI) threads the bilayer. The Cytoplasmic segment spans residues 189–214 (ATNGAMKGGGPYYLIGRALGPEVGVS). Residues 215-235 (IGLCFFLGNAVAGSMYVLGAV) form a helical membrane-spanning segment. The Extracellular segment spans residues 236-280 (ETFLDAVPSAGFFKESVTVVNNTLVNGTATASTATISTPSLHDLQ). 2 N-linked (GlcNAc...) asparagine glycosylation sites follow: Asn256 and Asn261. Residues 281 to 301 (VYGVIVTILLCFIVFGGVKII) traverse the membrane as a helical segment. At 302–304 (NKV) the chain is on the cytoplasmic side. The helical transmembrane segment at 305 to 325 (APAFLIPVLFSLLCIYLGVFI) threads the bilayer. At 326 to 365 (APRHNAPKGITGLSITTFKDNWGSEYQRTNNAGVPDPNGS) the chain is on the extracellular side. A glycan (N-linked (GlcNAc...) asparagine) is linked at Asn363. The helical transmembrane segment at 366–386 (IYWDFNALVGLFFPAVTGIMA) threads the bilayer. Residues 387 to 405 (GSNRSASLKDTQRSIPIGT) lie on the Cytoplasmic side of the membrane. A helical membrane pass occupies residues 406-426 (LSATLTTTAMYLFSVLLFGAL). Over 427-441 (ATREELLTDRLLTAT) the chain is Extracellular. The helical transmembrane segment at 442–462 (VAWPAPAVIYIGIILSTLGAA) threads the bilayer. Over 463–498 (LQSLTGAPRLLAAIANDDILPVLNYFKVSEGAEPHS) the chain is Cytoplasmic. The helical transmembrane segment at 499–519 (ATLFTAFICICCVVIGNLDLI) threads the bilayer. Residues 520–522 (TPT) are Extracellular-facing. The helical transmembrane segment at 523-543 (ITMFFLLCYAGVNLSCFLLDL) threads the bilayer. Residues 544-551 (LDAPSWRP) are Cytoplasmic-facing. A helical transmembrane segment spans residues 552–572 (RWKFHHWSLSLVGALLCVVIM). Residues 573 to 578 (FLISWS) are Extracellular-facing. A helical membrane pass occupies residues 579 to 599 (FTVVSLALASLIYYYVSLKGK). Residues 600 to 989 (AGDWGDGFKS…YRRDVVTFFT (390 aa)) are Cytoplasmic-facing.

This sequence belongs to the SLC12A transporter family. As to expression, expressed in roots, stems and leaves with higher expression in root and leaf tips.

The protein resides in the membrane. Functionally, probable cation/chloride cotransporter that may mediate potassium-chloride cotransport. Involved in plant development and K(+) and Cl(-) homeostasis. May not be involved in sodium-chloride cotransport. This Oryza sativa subsp. japonica (Rice) protein is Cation-chloride cotransporter 1 (CCC1).